Here is an 81-residue protein sequence, read N- to C-terminus: Small ribosomal subunit protein uS15 (81 aa).

It belongs to the universal ribosomal protein uS15 family. Part of the 30S ribosomal subunit. Forms a bridge to the 50S subunit in the 70S ribosome, contacting the 23S rRNA.

One of the primary rRNA binding proteins, it binds directly to 16S rRNA where it helps nucleate assembly of the platform of the 30S subunit by binding and bridging several RNA helices of the 16S rRNA. Functionally, forms an intersubunit bridge (bridge B4) with the 23S rRNA of the 50S subunit in the ribosome. The sequence is that of Small ribosomal subunit protein uS15 from Mesomycoplasma hyorhinis (Mycoplasma hyorhinis).